Consider the following 199-residue polypeptide: UPF0637 protein YsbB (199 aa).

Belongs to the UPF0637 family.

The sequence is that of UPF0637 protein YsbB (ysbB) from Lactococcus lactis subsp. lactis (strain IL1403) (Streptococcus lactis).